A 397-amino-acid polypeptide reads, in one-letter code: Staphyloferrin A transporter (397 aa).

12 consecutive transmembrane segments (helical) span residues 10-30 (FLLF…VLTT), 39-59 (IVNF…GAIA), 67-87 (LLRI…VLTY), 93-110 (PISV…LSAV), 137-157 (FIIN…LAVY), 162-182 (TFLA…PLHF), 213-233 (IFIT…LLPV), 245-265 (IFGI…LVLP), 271-292 (IGMV…LGVV), 296-313 (IVIM…SQWA), 333-353 (VLSI…LMSI), and 358-378 (FGIV…TMVF).

The protein belongs to the major facilitator superfamily.

It localises to the cell membrane. Functionally, involved in staphyloferrin A secretion. The polypeptide is Staphyloferrin A transporter (Staphylococcus aureus (strain NCTC 8325 / PS 47)).